The following is a 183-amino-acid chain: Acidic proline-rich protein HP43A (183 aa).

The first 14 residues, 1–14 (MLVVLLTAALLAEH), serve as a signal peptide directing secretion. The segment at 22–183 (ISQLSEEEQQ…QGSEEQSTSL (162 aa)) is disordered. Positions 52-65 (SDEEGDDDGEEDGN) are enriched in acidic residues. 5 consecutive repeat copies span residues 81–100 (RPPKPGNQQGPPQQEGQQQN), 101–120 (RPPKPGNQEGPPQQEGQQQN), 121–140 (RPPKPGNQEGPPQQEGQQQN), 141–160 (RPPKPGNQEGPPQQEGQQQN), and 161–180 (RPPKPGNQEGPPQQGSEEQS). The span at 86 to 183 (GNQQGPPQQE…QGSEEQSTSL (98 aa)) shows a compositional bias: low complexity.

It is found in the secreted. This chain is Acidic proline-rich protein HP43A (H29), found in Mesocricetus auratus (Golden hamster).